Here is a 306-residue protein sequence, read N- to C-terminus: Metal ABC transporter substrate-binding lipoprotein SloC (306 aa).

The first 19 residues, 1–19, serve as a signal peptide directing secretion; that stretch reads MKKLSLLLLVCLSLLGLFA. Residue Cys-20 is the site of N-palmitoyl cysteine attachment. Residue Cys-20 is the site of S-diacylglycerol cysteine attachment. Positions 64, 136, 202, and 277 each coordinate a divalent metal cation.

It belongs to the bacterial solute-binding protein 9 family. Lipoprotein receptor antigen (Lrai) subfamily.

Its subcellular location is the cell membrane. In terms of biological role, part of the ATP-binding cassette (ABC) transport system SloABC involved in metal import. Binds a metal with high affinity and specificity and delivers it to the membrane permease for translocation into the cytoplasm. May act as an adhesin which is involved on adherence to extracellular matrix. It is an important factor in pathogenesis and infection. May contribute to the formation and accumulation of dental plaque. The sequence is that of Metal ABC transporter substrate-binding lipoprotein SloC (sloC) from Streptococcus mutans serotype c (strain ATCC 700610 / UA159).